The following is a 410-amino-acid chain: MWTSWWLWPLVAVCTADSFLDQAVQILRVTPVIDGHNDLPWQLLNKFNNRLQDSRANLTVLADTHTNIPKLRAGFVGGQFWSAYTPCDTQNKDTVRRTLEQMDVVHRMCQLYPETFLCVTDSAGIQQAFREGKVASLIGVEGGHSIDSSLGVLRALYRLGMRYLTLTHNCNTPWADNWLVDRGDDEAQSGGLSVFGQRVVREMNRLGVMIDLAHVSVATMKAALQLSTAPVIFSHSSAFTVCAHKRNVPDDVLQLVKETGSLVMVNFYNDYVSCASEATLSQVADHLDYIKNVAGAAAVRFGGDFDGVTRLPVGLEDVSKYPDLVAELLRRGWTEAEVRGALAENLLRVFREVEQVSNQAQVPEEEPISLEQLGGSCRTQYGYSEAPSLHRRPGALLASLSLLLLSLGLL.

An N-terminal signal peptide occupies residues 1-16; that stretch reads MWTSWWLWPLVAVCTA. Residues H36 and D38 each coordinate Zn(2+). N57 carries an N-linked (GlcNAc...) asparagine glycan. C87 and C170 are disulfide-bonded. E141 is a binding site for Zn(2+). H168 contacts substrate. Positions 214 and 235 each coordinate Zn(2+). A disulfide bridge connects residues C242 and C274. R246 and D304 together coordinate substrate. Residue S384 is the site of GPI-anchor amidated serine attachment. The propeptide at 385–410 is removed in mature form; that stretch reads EAPSLHRRPGALLASLSLLLLSLGLL.

Belongs to the metallo-dependent hydrolases superfamily. Peptidase M19 family. Homodimer; disulfide-linked. Requires Zn(2+) as cofactor.

Its subcellular location is the apical cell membrane. It is found in the cell projection. The protein resides in the microvillus membrane. The enzyme catalyses an L-aminoacyl-L-amino acid + H2O = 2 an L-alpha-amino acid. The catalysed reaction is leukotriene D4 + H2O = leukotriene E4 + glycine. It catalyses the reaction L-cystine-bis-glycine + 2 H2O = L-cystine + 2 glycine. It carries out the reaction a beta-lactam + H2O = a substituted beta-amino acid. The enzyme catalyses glycyldehydrophenylalanine + H2O = 2,3-didehydrophenylalanine + glycine. Its activity is regulated as follows. Inhibited by L-penicillamine. Beta-lactamase activity is inhibited by cilastatin. Hydrolyzes a wide range of dipeptides including the conversion of leukotriene D4 to leukotriene E4. Hydrolyzes cystinyl-bis-glycine (cys-bis-gly) formed during glutathione degradation. Also possesses beta lactamase activity and hydrolytically inactivates beta-lactam antibiotics. Functionally, independently of its dipeptidase activity, acts as an adhesion receptor for neutrophil recruitment from bloodstream into inflamed lungs and liver. This Oryctolagus cuniculus (Rabbit) protein is Dipeptidase 1 (DPEP1).